The following is a 122-amino-acid chain: UPF0102 protein CPR_1677 (122 aa).

Belongs to the UPF0102 family.

This is UPF0102 protein CPR_1677 from Clostridium perfringens (strain SM101 / Type A).